The primary structure comprises 484 residues: Fumigaclavine B O-acetyltransferase ifgI (484 aa).

It belongs to the fumigaclavine B O-acetyltransferase family. In terms of assembly, monomer.

The enzyme catalyses fumigaclavine B + acetyl-CoA = fumigaclavine A + CoA. The protein operates within alkaloid biosynthesis; ergot alkaloid biosynthesis. In terms of biological role, fumigaclavine B O-acetyltransferase; part of the gene cluster that mediates the biosynthesis of isofumigaclavines, fungal ergot alkaloids. The tryptophan dimethylallyltransferase ifgA catalyzes the first step of ergot alkaloid biosynthesis by condensing dimethylallyl diphosphate (DMAP) and tryptophan to form 4-dimethylallyl-L-tryptophan. The second step is catalyzed by the methyltransferase ifgB that methylates 4-dimethylallyl-L-tryptophan in the presence of S-adenosyl-L-methionine, resulting in the formation of N-methyl-dimethylallyl-L-tryptophan. The catalase ifgD and the FAD-dependent oxidoreductase ifgC then transform N-methyl-dimethylallyl-L-tryptophan to chanoclavine-I which is further oxidized by ifgE in the presence of NAD(+), resulting in the formation of chanoclavine-I aldehyde. The chanoclavine-I aldehyde reductases ifgG and/or fgaOx3 reduce chanoclavine-I aldehyde to dihydrochanoclavine-I aldehyde that spontaneously dehydrates to form 6,8-dimethyl-6,7-didehydroergoline. The festuclavine dehydrogenases ifgF1 and/or ifgF2 then catalyze the reduction of 6,8-dimethyl-6,7-didehydroergoline to form festuclavine. Hydrolysis of festuclavine by a yet undetermined cytochrome P450 monooxygenase (called ifgH) then leads to the formation of isofumigaclavine B which is in turn acetylated by ifgI to isofumigaclavine A. Penicillium roqueforti has interestingly at least two sets of genes for the consumption of chanoclavine-I aldehyde on three different loci, the OYEs ifgG/fgaOx3 and the festuclavine synthase homologs ifgF1/ifgF2. The reason for the duplication of these genes is unclear, probably to ensure the conversion of chanoclavine-I aldehyde by differential gene expression under various environmental conditions. The chain is Fumigaclavine B O-acetyltransferase ifgI from Penicillium roqueforti (strain FM164).